Reading from the N-terminus, the 236-residue chain is Phosphoribosylaminoimidazole-succinocarboxamide synthase (236 aa).

This sequence belongs to the SAICAR synthetase family.

It carries out the reaction 5-amino-1-(5-phospho-D-ribosyl)imidazole-4-carboxylate + L-aspartate + ATP = (2S)-2-[5-amino-1-(5-phospho-beta-D-ribosyl)imidazole-4-carboxamido]succinate + ADP + phosphate + 2 H(+). Its pathway is purine metabolism; IMP biosynthesis via de novo pathway; 5-amino-1-(5-phospho-D-ribosyl)imidazole-4-carboxamide from 5-amino-1-(5-phospho-D-ribosyl)imidazole-4-carboxylate: step 1/2. In Campylobacter jejuni subsp. jejuni serotype O:6 (strain 81116 / NCTC 11828), this protein is Phosphoribosylaminoimidazole-succinocarboxamide synthase.